Here is a 522-residue protein sequence, read N- to C-terminus: Cytochrome P450 714C2 (522 aa).

Residues 1–11 (MELFSSQQWLA) are Lumenal-facing. The helical; Signal-anchor for type III membrane protein transmembrane segment at 12-32 (LLPPIILCILLFSYVYIILWL) threads the bilayer. Residues 33 to 522 (RPERLRQKLR…KGVPLIFREL (490 aa)) lie on the Cytoplasmic side of the membrane. Residue cysteine 470 coordinates heme.

Belongs to the cytochrome P450 family. Heme is required as a cofactor.

It is found in the membrane. Functionally, probably not involved in gibberellin metabolism since over-expression of CYP714C2 in a heterologous system does not induce semi-dwarfism. This is Cytochrome P450 714C2 (CYP714C2) from Oryza sativa subsp. japonica (Rice).